We begin with the raw amino-acid sequence, 602 residues long: Replication protein E1 (602 aa).

Positions 74 to 76 (KRK) match the Nuclear localization signal motif. Phosphoserine; by host is present on residues Ser-80, Ser-84, and Ser-95. A DNA-binding region region spans residues 138 to 306 (QQSVSDTPVT…TNVNHQMLQE (169 aa)). The SF3 helicase domain occupies 405 to 555 (VEFIPFMVKL…LPIRNGTPVY (151 aa)). 431–438 (GPPNSGKS) serves as a coordination point for ATP. A Glycyl lysine isopeptide (Lys-Gly) (interchain with G-Cter in SUMO) cross-link involves residue Lys-512. A disordered region spans residues 577–602 (DPEDEGDDGGSQPALRLHTGGTSQSL).

This sequence belongs to the papillomaviridae E1 protein family. As to quaternary structure, can form hexamers. Interacts with E2 protein; this interaction increases E1 DNA binding specificity. Interacts with host DNA polymerase subunit POLA2. Interacts with host single stranded DNA-binding protein RPA1. Interacts with host TOP1; this interaction stimulates the enzymatic activity of TOP1. In terms of processing, phosphorylated. Sumoylated.

It localises to the host nucleus. The enzyme catalyses Couples ATP hydrolysis with the unwinding of duplex DNA by translocating in the 3'-5' direction.. It carries out the reaction ATP + H2O = ADP + phosphate + H(+). In terms of biological role, ATP-dependent DNA 3'-5' helicase required for initiation of viral DNA replication. It forms a complex with the viral E2 protein. The E1-E2 complex binds to the replication origin which contains binding sites for both proteins. During the initial step, a dimer of E1 interacts with a dimer of protein E2 leading to a complex that binds the viral origin of replication with high specificity. Then, a second dimer of E1 displaces the E2 dimer in an ATP-dependent manner to form the E1 tetramer. Following this, two E1 monomers are added to each half of the site, which results in the formation of two E1 trimers on the viral ori. Subsequently, two hexamers will be created. The double hexamer acts as a bi-directional helicase machinery and unwinds the viral DNA and then recruits the host DNA polymerase to start replication. In Sylvilagus floridanus (Cottontail rabbit), this protein is Replication protein E1.